The sequence spans 178 residues: Cytochrome b6-f complex iron-sulfur subunit (178 aa).

Residues 20–42 (LLTFGTATGVALGALYPVANYFM) form a helical membrane-spanning segment. Positions 71-161 (NHPAGDRSLV…IDVEDDKVFV (91 aa)) constitute a Rieske domain. [2Fe-2S] cluster is bound by residues Cys-107, His-109, Cys-125, and His-128. The cysteines at positions 112 and 127 are disulfide-linked.

The protein belongs to the Rieske iron-sulfur protein family. As to quaternary structure, the 4 large subunits of the cytochrome b6-f complex are cytochrome b6, subunit IV (17 kDa polypeptide, PetD), cytochrome f and the Rieske protein, while the 4 small subunits are PetG, PetL, PetM and PetN. The complex functions as a dimer. [2Fe-2S] cluster serves as cofactor.

The protein resides in the cellular thylakoid membrane. The enzyme catalyses 2 oxidized [plastocyanin] + a plastoquinol + 2 H(+)(in) = 2 reduced [plastocyanin] + a plastoquinone + 4 H(+)(out). Its function is as follows. Component of the cytochrome b6-f complex, which mediates electron transfer between photosystem II (PSII) and photosystem I (PSI), cyclic electron flow around PSI, and state transitions. This chain is Cytochrome b6-f complex iron-sulfur subunit, found in Prochlorococcus marinus (strain MIT 9211).